We begin with the raw amino-acid sequence, 385 residues long: Probable tRNA sulfurtransferase (385 aa).

In terms of domain architecture, THUMP spans 57–160 (DGVIERVKKV…RGNAYVFTDK (104 aa)). Residues 180–181 (ML), 205–206 (YY), Arg262, Gly284, and Gln293 contribute to the ATP site.

Belongs to the ThiI family.

It is found in the cytoplasm. The enzyme catalyses [ThiI sulfur-carrier protein]-S-sulfanyl-L-cysteine + a uridine in tRNA + 2 reduced [2Fe-2S]-[ferredoxin] + ATP + H(+) = [ThiI sulfur-carrier protein]-L-cysteine + a 4-thiouridine in tRNA + 2 oxidized [2Fe-2S]-[ferredoxin] + AMP + diphosphate. It carries out the reaction [ThiS sulfur-carrier protein]-C-terminal Gly-Gly-AMP + S-sulfanyl-L-cysteinyl-[cysteine desulfurase] + AH2 = [ThiS sulfur-carrier protein]-C-terminal-Gly-aminoethanethioate + L-cysteinyl-[cysteine desulfurase] + A + AMP + 2 H(+). The protein operates within cofactor biosynthesis; thiamine diphosphate biosynthesis. Its function is as follows. Catalyzes the ATP-dependent transfer of a sulfur to tRNA to produce 4-thiouridine in position 8 of tRNAs, which functions as a near-UV photosensor. Also catalyzes the transfer of sulfur to the sulfur carrier protein ThiS, forming ThiS-thiocarboxylate. This is a step in the synthesis of thiazole, in the thiamine biosynthesis pathway. The sulfur is donated as persulfide by IscS. This Clostridium perfringens (strain SM101 / Type A) protein is Probable tRNA sulfurtransferase.